The chain runs to 567 residues: Sensor histidine kinase MtrB (567 aa).

Over residues 1–15 the composition is skewed to basic residues; sequence MIFGSRRRIRGRRGR. Residues 1–20 are disordered; that stretch reads MIFGSRRRIRGRRGRSGPMT. Helical transmembrane passes span 42–62 and 213–233; these read VVAL…FVLT and GTMA…ALLV. An HAMP domain is found at 235–287; sequence RQVVVPVRSASRIAERFAEGHLSERMPVRGEDDMARLAVSFNDMAESLSRQIA. Residues 302-519 enclose the Histidine kinase domain; the sequence is DVSHELRTPL…CFRLTLPMVR (218 aa). H305 carries the phosphohistidine; by autocatalysis modification. Pro residues predominate over residues 529 to 551; the sequence is PMKPIPQPVLQPVAQPNPQPMPP. A disordered region spans residues 529-567; the sequence is PMKPIPQPVLQPVAQPNPQPMPPEYKERQRPREHAEWSG. Over residues 552–567 the composition is skewed to basic and acidic residues; sequence EYKERQRPREHAEWSG.

In terms of assembly, interacts with MrtA. Interacts with LpqB, probably extracytoplasmically via MtrB's sensor domain. Mg(2+) is required as a cofactor. The cofactor is Ca(2+). Post-translationally, the C-terminal domain (residues 234-567) autophosphorylates.

The protein localises to the cell membrane. The catalysed reaction is ATP + protein L-histidine = ADP + protein N-phospho-L-histidine.. Ca(2+) ions inhibit the phosphotransfer from MtrB to MtrA. Member of the two-component regulatory system MtrA/MtrB. Probably functions as a membrane-associated protein kinase that phosphorylates MtrA in response to environmental signals. Autophosphorylates and transfers phosphate to MtrA in vitro. Overexpression of MtrA alone decreases bacterial virulence in mouse infection; co-expression of MtrA and MtrB restores normal bacterial growth, suggesting that bacterial growth in macrophages requires an optimal ratio of MtrB to MtrA. Probably plays a role in cell division. The sequence is that of Sensor histidine kinase MtrB (mtrB) from Mycobacterium tuberculosis (strain ATCC 25618 / H37Rv).